Here is a 254-residue protein sequence, read N- to C-terminus: Imidazole glycerol phosphate synthase subunit HisF (254 aa).

Active-site residues include D12 and D131.

It belongs to the HisA/HisF family. As to quaternary structure, heterodimer of HisH and HisF.

It is found in the cytoplasm. It carries out the reaction 5-[(5-phospho-1-deoxy-D-ribulos-1-ylimino)methylamino]-1-(5-phospho-beta-D-ribosyl)imidazole-4-carboxamide + L-glutamine = D-erythro-1-(imidazol-4-yl)glycerol 3-phosphate + 5-amino-1-(5-phospho-beta-D-ribosyl)imidazole-4-carboxamide + L-glutamate + H(+). Its pathway is amino-acid biosynthesis; L-histidine biosynthesis; L-histidine from 5-phospho-alpha-D-ribose 1-diphosphate: step 5/9. Its function is as follows. IGPS catalyzes the conversion of PRFAR and glutamine to IGP, AICAR and glutamate. The HisF subunit catalyzes the cyclization activity that produces IGP and AICAR from PRFAR using the ammonia provided by the HisH subunit. This Kocuria rhizophila (strain ATCC 9341 / DSM 348 / NBRC 103217 / DC2201) protein is Imidazole glycerol phosphate synthase subunit HisF.